The primary structure comprises 261 residues: Monensin polyketide synthase putative ketoacyl reductase (261 aa).

10–34 (LVTGATSGIGLATARLLAAQGHLVF) serves as a coordination point for NAD(+). Serine 144 provides a ligand contact to substrate. The Proton acceptor role is filled by tyrosine 157.

Belongs to the short-chain dehydrogenases/reductases (SDR) family.

It participates in antifungal biosynthesis; monensin biosynthesis. The polypeptide is Monensin polyketide synthase putative ketoacyl reductase (Streptomyces virginiae (Streptomyces cinnamonensis)).